A 107-amino-acid polypeptide reads, in one-letter code: Diuretic hormone 45 (107 aa).

Positions 1–44 (LYAMSPMAARYSAGAPWLYLLADMPRDSQRLVDPADLHEGRARP) are excised as a propeptide. At V91 the chain carries Valine amide.

As to expression, expressed in corpora cardiaca (CC), corpora allata (CA), antennal lobe (AL) and gnathal ganglion (GNG) (at protein level). Expression in AL and GNG detected in some animals, in CC and CA in few animals (at protein level).

Its subcellular location is the secreted. Its function is as follows. Regulation of fluid secretion. This chain is Diuretic hormone 45, found in Agrotis ipsilon (Black cutworm moth).